Here is a 359-residue protein sequence, read N- to C-terminus: Small ribosomal subunit protein mS22 (359 aa).

Residues 40-65 are disordered; it reads RPQPFEVGQPRRLLSSEAESGSSEVK. S54 is modified (phosphoserine). An N6-acetyllysine modification is found at K210.

The protein belongs to the mitochondrion-specific ribosomal protein mS22 family. As to quaternary structure, component of the mitochondrial ribosome small subunit (28S) which comprises a 12S rRNA and about 30 distinct proteins.

It is found in the mitochondrion. In Mus musculus (Mouse), this protein is Small ribosomal subunit protein mS22 (Mrps22).